The primary structure comprises 244 residues: Thiol S-methyltransferase TMT1B (244 aa).

The N-terminal stretch at 1–23 (MDVLVPLLQLLVLLLTLPLHLLA) is a signal peptide.

This sequence belongs to the methyltransferase superfamily. As to expression, highly expressed in liver and kidney. No expression in testis, heart, lung, brain, spleen or cultured fibroblasts.

It localises to the endoplasmic reticulum membrane. The protein localises to the lipid droplet. It is found in the microsome. Its subcellular location is the cytoplasm. The protein resides in the cytosol. The enzyme catalyses a thiol + S-adenosyl-L-methionine = a methyl thioether + S-adenosyl-L-homocysteine + H(+). Its function is as follows. Thiol S-methyltransferase that catalyzes the transfer of a methyl group from S-adenosyl-L-methionine to alkyl and phenolic thiol-containing acceptor substrates. Together with TMT1B accounts for most of S-thiol methylation activity in the endoplasmic reticulum of hepatocytes. Selectively methylates S-centered nucleophiles from metabolites such as hydrogen sulfide and dithiothreitol. The chain is Thiol S-methyltransferase TMT1B (Tmt1b) from Rattus norvegicus (Rat).